We begin with the raw amino-acid sequence, 476 residues long: MATPANQTGRITQVIGAVVDVQFEGHLPAILNAIETKNGDNRLVLEVAQHLGESTVRTIAMDTTEGLVRGQEVTDTGAPISVPVGAGTLGRIMNVIGEPVDEQGPIKSEGLRAIHQEAPAYTDQSTEAEILVTGIKVVDLLAPYAKGGKIGLFGGAGVGKTVLIQELINNVARAHGGYSVFAGVGERTREGNDLYHEFIESGVNKKGGGEGSKCALVYGQMNEPPGARARVGLTGLTVAEHFRDQGQDVLFFVDNIFRFTQAGSEVSALLGRIPSAVGYQPTLATDMGALQERITTTTKGSITSVQAIYVPADDLTDPAPATSFAHLDATTVLNRAISEKGIYPAVDPLDSTSRMLSASIVGEEHYNTARMVQQILQKYKSLQDIIAILGMDELSEEDKLTVARARKIERFLSQPFFVAEVFTGSPGKFVDLADTIKGFRAICEGKYDHLPEAAFYMVGTIEEAVEKGKKLAAEAA.

An ATP-binding site is contributed by Gly154 to Thr161.

It belongs to the ATPase alpha/beta chains family. F-type ATPases have 2 components, CF(1) - the catalytic core - and CF(0) - the membrane proton channel. CF(1) has five subunits: alpha(3), beta(3), gamma(1), delta(1), epsilon(1). CF(0) has four main subunits: a(1), b(1), b'(1) and c(9-12).

Its subcellular location is the cell inner membrane. It catalyses the reaction ATP + H2O + 4 H(+)(in) = ADP + phosphate + 5 H(+)(out). Functionally, produces ATP from ADP in the presence of a proton gradient across the membrane. The catalytic sites are hosted primarily by the beta subunits. This is ATP synthase subunit beta from Rhodopseudomonas palustris (strain ATCC BAA-98 / CGA009).